A 98-amino-acid polypeptide reads, in one-letter code: Small ribosomal subunit protein uS19 (98 aa).

2 disordered regions span residues 1-30 (MARS…KKSV) and 78-98 (RTFH…PAKK). Residues 9 to 24 (PFADKHLTKKVEDANK) are compositionally biased toward basic and acidic residues.

This sequence belongs to the universal ribosomal protein uS19 family.

Its function is as follows. Protein S19 forms a complex with S13 that binds strongly to the 16S ribosomal RNA. In Anaeromyxobacter dehalogenans (strain 2CP-C), this protein is Small ribosomal subunit protein uS19.